A 310-amino-acid polypeptide reads, in one-letter code: Porphobilinogen deaminase (310 aa).

The residue at position 240 (C240) is an S-(dipyrrolylmethanemethyl)cysteine.

It belongs to the HMBS family. Monomer. The cofactor is dipyrromethane.

The enzyme catalyses 4 porphobilinogen + H2O = hydroxymethylbilane + 4 NH4(+). It functions in the pathway porphyrin-containing compound metabolism; protoporphyrin-IX biosynthesis; coproporphyrinogen-III from 5-aminolevulinate: step 2/4. Its function is as follows. Tetrapolymerization of the monopyrrole PBG into the hydroxymethylbilane pre-uroporphyrinogen in several discrete steps. This chain is Porphobilinogen deaminase, found in Desulfosudis oleivorans (strain DSM 6200 / JCM 39069 / Hxd3) (Desulfococcus oleovorans).